Consider the following 271-residue polypeptide: Formamidopyrimidine-DNA glycosylase (271 aa).

The active-site Schiff-base intermediate with DNA is the Pro2. The Proton donor role is filled by Glu3. Catalysis depends on Lys58, which acts as the Proton donor; for beta-elimination activity. Residues His92, Arg111, and Lys152 each contribute to the DNA site. The FPG-type zinc-finger motif lies at 237-271 (YVYGKVQKPCKICNNIITLIRQNGRSTYFCNACQN). The active-site Proton donor; for delta-elimination activity is the Arg261.

The protein belongs to the FPG family. In terms of assembly, monomer. The cofactor is Zn(2+).

It catalyses the reaction Hydrolysis of DNA containing ring-opened 7-methylguanine residues, releasing 2,6-diamino-4-hydroxy-5-(N-methyl)formamidopyrimidine.. The catalysed reaction is 2'-deoxyribonucleotide-(2'-deoxyribose 5'-phosphate)-2'-deoxyribonucleotide-DNA = a 3'-end 2'-deoxyribonucleotide-(2,3-dehydro-2,3-deoxyribose 5'-phosphate)-DNA + a 5'-end 5'-phospho-2'-deoxyribonucleoside-DNA + H(+). Its function is as follows. Involved in base excision repair of DNA damaged by oxidation or by mutagenic agents. Acts as a DNA glycosylase that recognizes and removes damaged bases. Has a preference for oxidized purines, such as 7,8-dihydro-8-oxoguanine (8-oxoG). Has AP (apurinic/apyrimidinic) lyase activity and introduces nicks in the DNA strand. Cleaves the DNA backbone by beta-delta elimination to generate a single-strand break at the site of the removed base with both 3'- and 5'-phosphates. The polypeptide is Formamidopyrimidine-DNA glycosylase (Wolbachia pipientis wMel).